The chain runs to 461 residues: Dihydrolipoyl dehydrogenase (461 aa).

FAD-binding positions include 33 to 41 (EAAEVGGVC), Lys50, and Ala112. Cys41 and Cys46 form a disulfide bridge. NAD(+)-binding positions include 173-177 (GGGAV), Glu196, and 263-266 (AVGR). Asp306 and Ala314 together coordinate FAD. His437 serves as the catalytic Proton acceptor.

Belongs to the class-I pyridine nucleotide-disulfide oxidoreductase family. As to quaternary structure, homodimer. Requires FAD as cofactor.

Its subcellular location is the membrane. The enzyme catalyses N(6)-[(R)-dihydrolipoyl]-L-lysyl-[protein] + NAD(+) = N(6)-[(R)-lipoyl]-L-lysyl-[protein] + NADH + H(+). Has chromate reductase activity. The protein is Dihydrolipoyl dehydrogenase of Thermus scotoductus (strain ATCC 700910 / SA-01).